Here is a 417-residue protein sequence, read N- to C-terminus: Squalene synthase (417 aa).

The NADP(+) site is built by R52 and R77. 3 residues coordinate Mg(2+): D80, E83, and D84. Residue R218 participates in NADP(+) binding. The helical transmembrane segment at 284 to 304 threads the bilayer; sequence SIFNFCAIPQVMAIATLAACY. NADP(+)-binding residues include K315 and R317. The helical transmembrane segment at 384 to 404 threads the bilayer; the sequence is PIYLSFVMLLAALSWQYLSTL.

This sequence belongs to the phytoene/squalene synthase family. Mg(2+) serves as cofactor.

It localises to the endoplasmic reticulum membrane. The catalysed reaction is 2 (2E,6E)-farnesyl diphosphate + NADPH + H(+) = squalene + 2 diphosphate + NADP(+). It catalyses the reaction 2 (2E,6E)-farnesyl diphosphate + NADH + H(+) = squalene + 2 diphosphate + NAD(+). It carries out the reaction presqualene diphosphate + NADH + H(+) = squalene + diphosphate + NAD(+). The enzyme catalyses presqualene diphosphate + NADPH + H(+) = squalene + diphosphate + NADP(+). The catalysed reaction is 2 (2E,6E)-farnesyl diphosphate = presqualene diphosphate + diphosphate. It functions in the pathway terpene metabolism; lanosterol biosynthesis; lanosterol from farnesyl diphosphate: step 1/3. Catalyzes the condensation of 2 farnesyl pyrophosphate (FPP) moieties to form squalene. Proceeds in two distinct steps. In the first half-reaction, two molecules of FPP react to form the stable presqualene diphosphate intermediate (PSQPP), with concomitant release of a proton and a molecule of inorganic diphosphate. In the second half-reaction, PSQPP undergoes heterolysis, isomerization, and reduction with NADPH or NADH to form squalene. It is the first committed enzyme of the sterol biosynthesis pathway. The sequence is that of Squalene synthase (FDFT1) from Bos taurus (Bovine).